A 351-amino-acid chain; its full sequence is Serine/threonine-protein kinase ZRK1 (351 aa).

The 288-residue stretch at 60–347 (FDSSCFVSQD…KELKQIEASL (288 aa)) folds into the Protein kinase domain. ATP is bound by residues 66–74 (VSQDVYYKW) and lysine 87. The Proton acceptor role is filled by aspartate 191.

This sequence belongs to the protein kinase superfamily. Ser/Thr protein kinase family. ZRK subfamily. Component of a stable high-order oligomeric complex made of RKS1 and RPP13L4/ZAR1 which recruits Xanthomonas campestris effector XopAC/AvrAC-mediated uridylylated PBL2 in the presence of ATP to form a wheel-like pentameric resistosome; this complex triggers immunity toward X.campestris in vascular tissues. Interacts with RPP13L4/ZAR1 and uridylylated PBL2. In terms of tissue distribution, expressed at high levels in germinating seeds and at lower levels in adult leaves.

The enzyme catalyses L-seryl-[protein] + ATP = O-phospho-L-seryl-[protein] + ADP + H(+). The catalysed reaction is L-threonyl-[protein] + ATP = O-phospho-L-threonyl-[protein] + ADP + H(+). Functionally, serine/threonine-protein kinase that confers a broad-spectrum quantitative disease resistance (QDR) to the pathogenic biotrophic bacteria Xanthomonas campestris (e.g. pv. campestris (Xcc), pv. raphani, pv. armoriaceae and pv. incanae) by restricting bacterial spread to the vascular system from the infection site; X.campestris causes black rot disease in crops. Seems to not have any kinase activity. In Arabidopsis thaliana (Mouse-ear cress), this protein is Serine/threonine-protein kinase ZRK1.